Reading from the N-terminus, the 283-residue chain is Isochorismatase domain-containing protein 1 (283 aa).

It belongs to the isochorismatase family.

The chain is Isochorismatase domain-containing protein 1 (isoc1) from Salmo salar (Atlantic salmon).